Reading from the N-terminus, the 395-residue chain is Aspergillopepsin-1 (395 aa).

A signal peptide spans 1-20; the sequence is MVVFSKVTAVVVGLSTIVSA. The propeptide at 21–70 is activation peptide; the sequence is VPVVQPRKGFTINQVARPVTNKKTVNLPAVYANALTKYGGTVPDSVKAAA. The Peptidase A1 domain maps to 86–392; it reads YLTPVKVGGT…DSQGPRLGFA (307 aa). Catalysis depends on residues Asp102 and Asp284. Cys320 and Cys355 are joined by a disulfide.

Belongs to the peptidase A1 family. Monomer.

Its subcellular location is the secreted. The catalysed reaction is Hydrolysis of proteins with broad specificity. Generally favors hydrophobic residues in P1 and P1', but also accepts Lys in P1, which leads to activation of trypsinogen. Does not clot milk.. In terms of biological role, secreted aspartic endopeptidase that allows assimilation of proteinaceous substrates. The scissile peptide bond is attacked by a nucleophilic water molecule activated by two aspartic residues in the active site. Shows a broad primary substrate specificity. Favors hydrophobic residues at the P1 and P1' positions, but also accepts a lysine residue in the P1 position, leading to the activation of trypsinogen and chymotrypsinogen A. This Aspergillus fumigatus (strain CBS 144.89 / FGSC A1163 / CEA10) (Neosartorya fumigata) protein is Aspergillopepsin-1 (pepA).